Consider the following 189-residue polypeptide: Keratin-associated protein 5-2 (189 aa).

Repeat copies occupy residues cysteine 21–proline 24, cysteine 27–proline 30, cysteine 33–proline 36, cysteine 134–proline 137, cysteine 144–proline 147, cysteine 159–proline 162, cysteine 169–proline 172, and cysteine 179–proline 182. The interval cysteine 27 to proline 182 is 8 X 4 AA repeats of C-C-X-P.

It belongs to the KRTAP type 5 family. Interacts with hair keratins.

Functionally, in the hair cortex, hair keratin intermediate filaments are embedded in an interfilamentous matrix, consisting of hair keratin-associated protein (KRTAP), which are essential for the formation of a rigid and resistant hair shaft through their extensive disulfide bond cross-linking with abundant cysteine residues of hair keratins. The matrix proteins include the high-sulfur and high-glycine-tyrosine keratins. The protein is Keratin-associated protein 5-2 of Mus musculus (Mouse).